The chain runs to 418 residues: UDP-N-acetylglucosamine 1-carboxyvinyltransferase 2 (418 aa).

Phosphoenolpyruvate is bound at residue 22-23; sequence KN. Arg92 contributes to the UDP-N-acetyl-alpha-D-glucosamine binding site. The Proton donor role is filled by Cys116. 2-(S-cysteinyl)pyruvic acid O-phosphothioketal is present on Cys116. 2 residues coordinate UDP-N-acetyl-alpha-D-glucosamine: Asp305 and Ile327.

It belongs to the EPSP synthase family. MurA subfamily.

The protein resides in the cytoplasm. The enzyme catalyses phosphoenolpyruvate + UDP-N-acetyl-alpha-D-glucosamine = UDP-N-acetyl-3-O-(1-carboxyvinyl)-alpha-D-glucosamine + phosphate. Its pathway is cell wall biogenesis; peptidoglycan biosynthesis. Cell wall formation. Adds enolpyruvyl to UDP-N-acetylglucosamine. This Mesorhizobium japonicum (strain LMG 29417 / CECT 9101 / MAFF 303099) (Mesorhizobium loti (strain MAFF 303099)) protein is UDP-N-acetylglucosamine 1-carboxyvinyltransferase 2.